Here is a 284-residue protein sequence, read N- to C-terminus: 4-diphosphocytidyl-2-C-methyl-D-erythritol kinase (284 aa).

The active site involves K14. 98–108 (PMGGGLGGGSS) contributes to the ATP binding site. The active site involves D140.

This sequence belongs to the GHMP kinase family. IspE subfamily.

It catalyses the reaction 4-CDP-2-C-methyl-D-erythritol + ATP = 4-CDP-2-C-methyl-D-erythritol 2-phosphate + ADP + H(+). It participates in isoprenoid biosynthesis; isopentenyl diphosphate biosynthesis via DXP pathway; isopentenyl diphosphate from 1-deoxy-D-xylulose 5-phosphate: step 3/6. Functionally, catalyzes the phosphorylation of the position 2 hydroxy group of 4-diphosphocytidyl-2C-methyl-D-erythritol. This chain is 4-diphosphocytidyl-2-C-methyl-D-erythritol kinase, found in Shewanella baltica (strain OS185).